Consider the following 409-residue polypeptide: Beta-glucanase (409 aa).

An N-terminal signal peptide occupies residues 1–31 (MRKNRGFSFSSKAVMMCCLAFLLIPASFAFA). Catalysis depends on E95, which acts as the Proton donor. D156 serves as the catalytic Nucleophile.

The protein belongs to the glycosyl hydrolase 8 (cellulase D) family.

The enzyme catalyses Hydrolysis of (1-&gt;4)-beta-D-glucosidic linkages in beta-D-glucans containing (1-&gt;3)- and (1-&gt;4)-bonds.. In Niallia circulans (Bacillus circulans), this protein is Beta-glucanase (bgc).